The sequence spans 182 residues: CDP-diacylglycerol--glycerol-3-phosphate 3-phosphatidyltransferase (182 aa).

Over 1-12 (MQLNIPTWLTLF) the chain is Cytoplasmic. Residues 13–37 (RVVMIPFFVLAFYLPFKWAPLCCAL) form a helical membrane-spanning segment. At 38 to 60 (IFVLAAVTDWFDGFLARRWKQTT) the chain is on the periplasmic side. A helical transmembrane segment spans residues 61–81 (RFGAFLDPVADKVMVAMALVL). Residues 82–86 (VAEHF) lie on the Cytoplasmic side of the membrane. Residues 87-107 (HSWWITLPAATMIAREIIISA) traverse the membrane as a helical segment. Topologically, residues 108 to 145 (LREWMAEIGKRSSVAVSWIGKVKTTAQMLALVTLLWRP) are periplasmic. A helical transmembrane segment spans residues 146–168 (DDIVSGIGIAALYVAAVLTFWSM). Topologically, residues 169 to 181 (FQYLYAARHDLFE) are cytoplasmic.

This sequence belongs to the CDP-alcohol phosphatidyltransferase class-I family.

Its subcellular location is the cell inner membrane. It catalyses the reaction a CDP-1,2-diacyl-sn-glycerol + sn-glycerol 3-phosphate = a 1,2-diacyl-sn-glycero-3-phospho-(1'-sn-glycero-3'-phosphate) + CMP + H(+). It functions in the pathway phospholipid metabolism; phosphatidylglycerol biosynthesis; phosphatidylglycerol from CDP-diacylglycerol: step 1/2. Catalyzes the conversion of cytidine diphosphate diacylglycerol (CDP-DG) and glycerol 3-phosphate into phosphatidylglycerol. Essential for the synthesis of anionic phospholipids, thereby playing a role in balancing the ratio of zwitterionic and anionic phospholipids, which is thought to be important for normal membrane function. The protein is CDP-diacylglycerol--glycerol-3-phosphate 3-phosphatidyltransferase of Sodalis glossinidius (strain morsitans).